A 1494-amino-acid chain; its full sequence is Serine/threonine-protein kinase VPS15 (1494 aa).

Glycine 2 carries the N-myristoyl glycine lipid modification. A Protein kinase domain is found at leucine 27 to leucine 307. Residues leucine 33–serine 41 and lysine 54 each bind ATP. Aspartate 149 acts as the Proton acceptor in catalysis. HEAT repeat units follow at residues asparagine 383–serine 421, aspartate 480–aspartate 517, lysine 524–glycine 562, lysine 610–glutamine 646, glutamine 648–glutamine 685, serine 687–leucine 724, and arginine 727–alanine 764. 2 disordered regions span residues glutamine 859–leucine 903 and serine 1037–aspartate 1064. A compositionally biased stretch (low complexity) spans serine 1037–serine 1047. WD repeat units follow at residues glutamate 1079 to serine 1118, leucine 1127 to glycine 1166, lysine 1184 to threonine 1226, proline 1231 to serine 1270, isoleucine 1276 to valine 1323, proline 1371 to cysteine 1409, and aspartate 1466 to lysine 1494.

Belongs to the protein kinase superfamily. Ser/Thr protein kinase family. In terms of assembly, interacts with VPS34. Component of a complex made of VPS38/USL1 and PI3K main subunits such as VPS15, ATG6/VPS30 and VPS34. Autophosphorylated. As to expression, mainly expressed in anthers, pollen grains and pollen tubes, and, to a lower extent, in other tissues and organs including seedlings, roots, stems, leaves, flowers, pitils and siliques.

The protein resides in the cytoplasm. It localises to the golgi apparatus. It is found in the trans-Golgi network membrane. The protein localises to the endosome membrane. The catalysed reaction is L-seryl-[protein] + ATP = O-phospho-L-seryl-[protein] + ADP + H(+). The enzyme catalyses L-threonyl-[protein] + ATP = O-phospho-L-threonyl-[protein] + ADP + H(+). Serine/threonine-protein kinase required for cytoplasm to vacuole transport (Cvt) and autophagy as a part of the autophagy-specific VPS34 PI3-kinase complex I. Required for pollen development and germination, probably via the modulation of phosphatidylinositol 3-phosphate (PI3P) formation and vacuolar organization. This Arabidopsis thaliana (Mouse-ear cress) protein is Serine/threonine-protein kinase VPS15.